Here is a 249-residue protein sequence, read N- to C-terminus: UPF0246 protein Lreu_0493 (249 aa).

Belongs to the UPF0246 family.

The chain is UPF0246 protein Lreu_0493 from Limosilactobacillus reuteri (strain DSM 20016) (Lactobacillus reuteri).